A 429-amino-acid chain; its full sequence is D-amino acid dehydrogenase (429 aa).

3–17 is a binding site for FAD; that stretch reads VLILGSGVIGTTTAW.

The protein belongs to the DadA oxidoreductase family. The cofactor is FAD.

It catalyses the reaction a D-alpha-amino acid + A + H2O = a 2-oxocarboxylate + AH2 + NH4(+). Its pathway is amino-acid degradation; D-alanine degradation; NH(3) and pyruvate from D-alanine: step 1/1. Its function is as follows. Oxidative deamination of D-amino acids. This chain is D-amino acid dehydrogenase, found in Xanthomonas campestris pv. campestris (strain B100).